The primary structure comprises 736 residues: DNA ligase (736 aa).

Residues 41–45, 91–92, and glutamate 125 contribute to the NAD(+) site; these read DQEYD and SL. Residue lysine 127 is the N6-AMP-lysine intermediate of the active site. Residue arginine 148 participates in NAD(+) binding. A disordered region spans residues 170–205; sequence ELTPLPLAGGAGGGPLDDSGSAPTPDPSRRREGKWN. Glutamate 215, lysine 347, and lysine 371 together coordinate NAD(+). Zn(2+)-binding residues include cysteine 463, cysteine 466, cysteine 481, and cysteine 487. The BRCT domain occupies 656-736; it reads TLDSPVAGKT…GWAEIVAAAG (81 aa).

The protein belongs to the NAD-dependent DNA ligase family. LigA subfamily. Mg(2+) serves as cofactor. It depends on Mn(2+) as a cofactor.

It carries out the reaction NAD(+) + (deoxyribonucleotide)n-3'-hydroxyl + 5'-phospho-(deoxyribonucleotide)m = (deoxyribonucleotide)n+m + AMP + beta-nicotinamide D-nucleotide.. Its function is as follows. DNA ligase that catalyzes the formation of phosphodiester linkages between 5'-phosphoryl and 3'-hydroxyl groups in double-stranded DNA using NAD as a coenzyme and as the energy source for the reaction. It is essential for DNA replication and repair of damaged DNA. The sequence is that of DNA ligase from Erythrobacter litoralis (strain HTCC2594).